A 308-amino-acid chain; its full sequence is Olfactory receptor 13H1 (308 aa).

Residues Met1 to Asp25 lie on the Extracellular side of the membrane. Asn5 carries an N-linked (GlcNAc...) asparagine glycan. Residues Thr26–Ile46 form a helical membrane-spanning segment. At Phe47–Asn54 the chain is on the cytoplasmic side. Residues Leu55 to Thr75 form a helical membrane-spanning segment. At Ala76–Ala99 the chain is on the extracellular side. Cys97 and Cys188 are disulfide-bonded. The helical transmembrane segment at Gln100 to Tyr120 threads the bilayer. At Asp121 to Pro139 the chain is on the cytoplasmic side. The chain crosses the membrane as a helical span at residues Val140–Leu159. Over Ile160–Phe196 the chain is Extracellular. The helical transmembrane segment at Met197–Ser216 threads the bilayer. Residues Tyr217 to Ala236 lie on the Cytoplasmic side of the membrane. A helical transmembrane segment spans residues Phe237 to Met257. Topologically, residues Tyr258–Asp270 are extracellular. The chain crosses the membrane as a helical span at residues Lys271 to Leu291. The Cytoplasmic segment spans residues Arg292–Thr308.

The protein belongs to the G-protein coupled receptor 1 family.

Its subcellular location is the cell membrane. Its function is as follows. Odorant receptor. The chain is Olfactory receptor 13H1 (OR13H1) from Homo sapiens (Human).